Consider the following 239-residue polypeptide: 1-(5-phosphoribosyl)-5-[(5-phosphoribosylamino)methylideneamino] imidazole-4-carboxamide isomerase (239 aa).

Asp-8 acts as the Proton acceptor in catalysis. Asp-129 acts as the Proton donor in catalysis.

The protein belongs to the HisA/HisF family.

It localises to the cytoplasm. It catalyses the reaction 1-(5-phospho-beta-D-ribosyl)-5-[(5-phospho-beta-D-ribosylamino)methylideneamino]imidazole-4-carboxamide = 5-[(5-phospho-1-deoxy-D-ribulos-1-ylimino)methylamino]-1-(5-phospho-beta-D-ribosyl)imidazole-4-carboxamide. Its pathway is amino-acid biosynthesis; L-histidine biosynthesis; L-histidine from 5-phospho-alpha-D-ribose 1-diphosphate: step 4/9. The chain is 1-(5-phosphoribosyl)-5-[(5-phosphoribosylamino)methylideneamino] imidazole-4-carboxamide isomerase from Bacillus cereus (strain B4264).